The chain runs to 976 residues: MWRNILGRASLRKVKFLSDSSSSGTHYPVNRVRGILSSVNLSGVRNGLSINPVNEMGGLSSFRHGQCYVFEGYATAAQAIDSTDPEDESSGSDEVNELITEMEKETERIRKKARLAAIPPKRVIAGMGAQKFYMLKQRQVKMETEEWERAARECREILADMCEQKLAPNLPYMKSLFLGWFEPVRNAIQDDLDTFKIKKGKIPYAPFMEQLPADKMAVITMHKMMGLLMTNAEGVGIVKLVNAATQIGEAVEQEVRINSFLQKKNKKNATDKTINTEAENVSEEIVAKETEKARKQVTVLMEKNKLRQVKALVRKHDSFKPWGQEAQVKVGARLIQLLMENAYIQPPAEQFDDGPPDIRPAFKQNFRTVTLENTKTSRRYGCIECDPLVLKGLDKSARHMVIPYLPMLIPPQNWTGYDQGAHFFLPSYVMRTHGAKQQRTVMKRTPKEQLEPVYEALDTLGNTKWKINKKVLSLVDRIWANGGRIGGLVDREDVPIPEEPEREDQEKFKNWRWESKKAIKQNNERHSQRCDIELKLEVARKMKDEEGFYYPHNVDFRGRAYPIHPYLNHLGSDLCRGILEFCEGKPLGKSGLRWLKIHIANLYAGGVDKLAYEDRIAFTESHLEDIFDSSDRPLEGKRWWLNAEDPFQCLAACINLSEALRSPFPEAAISHIPIHQDGSCNGLQHYAALGRDKLGADAVNLVTGEKPADVYTEIAARVLKIMQQDAEEDPETFPNATYAKLMLDQVDRKLVKQTVMTSVYGVTYSGARDQIKKRLKERGTFEDDSLTFHASCYAAKITLKALEEMFEAARAIKSWFGDCAKIIASENNAVCWTTPLGLPVVQPYRKPGRHLVKTTLQVLTLSRETDKVMARRQMTAFAPNFIHSLDGSHMMMTAVACNRAGLSFAGVHDSFWTHACDVDVMNTILREKFVELYEKPILENLLESFQKSFPDISFPPLPERGDFDLRKVLESTYFFN.

The N-terminal 42 residues, 1 to 42 (MWRNILGRASLRKVKFLSDSSSSGTHYPVNRVRGILSSVNLS), are a transit peptide targeting the mitochondrion. Catalysis depends on residues Asp677, Lys752, and Asp909.

Belongs to the phage and mitochondrial RNA polymerase family.

It is found in the mitochondrion. It carries out the reaction RNA(n) + a ribonucleoside 5'-triphosphate = RNA(n+1) + diphosphate. Functionally, DNA-dependent RNA polymerase catalyzes the transcription of DNA into RNA using the four ribonucleoside triphosphates as substrates. The chain is DNA-directed RNA polymerase 1, mitochondrial (RPOT1) from Arabidopsis thaliana (Mouse-ear cress).